Here is a 342-residue protein sequence, read N- to C-terminus: DNA primase (342 aa).

Zn(2+) is bound by residues Cys37, Cys40, Cys65, and Cys68.

The protein belongs to the Tequatrovirus DNA primase family. Monomer. Hexamer. Interacts with the DnaB-like replicative helicase; this interaction forms the active primosome complex, which is composed of 6 helicase and 1 primase subunits and expresses full helicase and primase activities. Interacts (via C-terminus) with the single-stranded DNA-binding protein. Part of the replicase complex that includes the DNA polymerase, the polymerase clamp, the clamp loader complex, the single-stranded DNA binding protein, the primase, the DnaB-like replicative helicase and the helicase assembly factor.

Its function is as follows. Synthesizes short RNA primers for the lagging strand DNA replication. The primase synthesizes short RNA primers on the lagging strand that the polymerase elongates using dNTPs. Recognizes two trinucleotide sequences 5'-GTT-3' and 5'-GCT-3' in vitro, but uses only the first as the priming site in vivo. The polypeptide is DNA primase (61) (Escherichia coli (Bacteriophage T4)).